Here is an 82-residue protein sequence, read N- to C-terminus: Small ribosomal subunit protein bS18 (82 aa).

Residues 1 to 25 (MKRNNMKRARMEQSRRPKKNPLKAE) are disordered.

This sequence belongs to the bacterial ribosomal protein bS18 family. Part of the 30S ribosomal subunit. Forms a tight heterodimer with protein bS6.

Functionally, binds as a heterodimer with protein bS6 to the central domain of the 16S rRNA, where it helps stabilize the platform of the 30S subunit. In Corynebacterium urealyticum (strain ATCC 43042 / DSM 7109), this protein is Small ribosomal subunit protein bS18.